A 488-amino-acid polypeptide reads, in one-letter code: Probable G-protein coupled receptor Mth-like 12 (488 aa).

Positions 1–17 are cleaved as a signal peptide; it reads MFLWLKCFCTLIIVTIA. At 18–215 the chain is on the extracellular side; sequence KNSSAKIPHC…NRRCYRNVMP (198 aa). 3 N-linked (GlcNAc...) asparagine glycosylation sites follow: Asn-19, Asn-34, and Asn-55. 5 cysteine pairs are disulfide-bonded: Cys-27/Cys-81, Cys-83/Cys-88, Cys-92/Cys-189, Cys-93/Cys-104, and Cys-155/Cys-209. N-linked (GlcNAc...) asparagine glycosylation occurs at Asn-141. Residues 216 to 236 form a helical membrane-spanning segment; it reads GIAQLSVISVVGFILTLAVYL. At 237 to 247 the chain is on the cytoplasmic side; it reads SVEKLRNLLGK. The chain crosses the membrane as a helical span at residues 248–268; the sequence is CLICSLFSMFMEYFIWTMDYF. Residues 269 to 283 are Extracellular-facing; it reads RLLQSICSAAGYMKY. Residues 284 to 304 form a helical membrane-spanning segment; the sequence is FFSMSSYLWFSVVSFHLWELF. Residues 305–315 are Cytoplasmic-facing; the sequence is TSLNRHEPQYR. A helical membrane pass occupies residues 316–336; that stretch reads FLIYNTFVWCTAAIPTVVIFS. The Extracellular segment spans residues 337–373; the sequence is MNQMWENDPGKSEWLPLVGYFGCSVKDWNSSSWFYSH. Asn-365 is a glycosylation site (N-linked (GlcNAc...) asparagine). A helical membrane pass occupies residues 374 to 394; it reads IPIVILNSFNVIMFVLTAIYI. Over 395–416 the chain is Cytoplasmic; sequence WKVKKGVKSFAQHDERNTTCLE. Residues 417–437 form a helical membrane-spanning segment; it reads FNVQTYIQFVRLFLIMGASWL. Topologically, residues 438–454 are extracellular; the sequence is LDQLTRLAEDSHLLLDT. Residues 455–475 traverse the membrane as a helical segment; that stretch reads IVLNLTVYLNAAFGILIFVLL. Topologically, residues 476 to 488 are cytoplasmic; sequence ILKGSTFKMIMER.

The protein belongs to the G-protein coupled receptor 2 family. Mth subfamily.

The protein localises to the cell membrane. The sequence is that of Probable G-protein coupled receptor Mth-like 12 (mthl12) from Drosophila melanogaster (Fruit fly).